The primary structure comprises 116 residues: Large ribosomal subunit protein uL18 (116 aa).

The protein belongs to the universal ribosomal protein uL18 family. As to quaternary structure, part of the 50S ribosomal subunit; part of the 5S rRNA/L5/L18/L25 subcomplex. Contacts the 5S and 23S rRNAs.

This is one of the proteins that bind and probably mediate the attachment of the 5S RNA into the large ribosomal subunit, where it forms part of the central protuberance. The polypeptide is Large ribosomal subunit protein uL18 (Pseudoalteromonas translucida (strain TAC 125)).